The chain runs to 312 residues: Serine/threonine-protein phosphatase PP1 isozyme 2 (312 aa).

Position 2 is an N-acetylalanine (A2). Mn(2+) contacts are provided by D70, H72, D98, and N130. Residue H131 is the Proton donor of the active site. 2 residues coordinate Mn(2+): H179 and H254.

This sequence belongs to the PPP phosphatase family. PP-1 subfamily. Interacts with SRK2D/SNRK2.2 and SRK2E/SNRK2.6. Requires Mn(2+) as cofactor.

The protein localises to the nucleus. Its subcellular location is the cytoplasm. The catalysed reaction is O-phospho-L-seryl-[protein] + H2O = L-seryl-[protein] + phosphate. It carries out the reaction O-phospho-L-threonyl-[protein] + H2O = L-threonyl-[protein] + phosphate. Its activity is regulated as follows. Phosphatase activity is strongly reduced by the protein phosphatase inhibitor 2 (I-2). In terms of biological role, serine/threonine-protein phosphatase that possesses phosphatase activity toward para-nitrophenyl phosphate (pNPP) in vitro. The protein is Serine/threonine-protein phosphatase PP1 isozyme 2 of Arabidopsis thaliana (Mouse-ear cress).